The primary structure comprises 71 residues: Translation initiation factor IF-1 (71 aa).

The 71-residue stretch at Met-1–Tyr-71 folds into the S1-like domain.

Belongs to the IF-1 family. In terms of assembly, component of the 30S ribosomal translation pre-initiation complex which assembles on the 30S ribosome in the order IF-2 and IF-3, IF-1 and N-formylmethionyl-tRNA(fMet); mRNA recruitment can occur at any time during PIC assembly.

The protein resides in the cytoplasm. One of the essential components for the initiation of protein synthesis. Stabilizes the binding of IF-2 and IF-3 on the 30S subunit to which N-formylmethionyl-tRNA(fMet) subsequently binds. Helps modulate mRNA selection, yielding the 30S pre-initiation complex (PIC). Upon addition of the 50S ribosomal subunit IF-1, IF-2 and IF-3 are released leaving the mature 70S translation initiation complex. The sequence is that of Translation initiation factor IF-1 from Christiangramia forsetii (strain DSM 17595 / CGMCC 1.15422 / KT0803) (Gramella forsetii).